A 640-amino-acid chain; its full sequence is Threonine--tRNA ligase (640 aa).

Residues Asp-224–Pro-525 form a catalytic region. 3 residues coordinate Zn(2+): Cys-323, His-374, and His-502.

This sequence belongs to the class-II aminoacyl-tRNA synthetase family. In terms of assembly, homodimer. The cofactor is Zn(2+).

It is found in the cytoplasm. The catalysed reaction is tRNA(Thr) + L-threonine + ATP = L-threonyl-tRNA(Thr) + AMP + diphosphate + H(+). Its function is as follows. Catalyzes the attachment of threonine to tRNA(Thr) in a two-step reaction: L-threonine is first activated by ATP to form Thr-AMP and then transferred to the acceptor end of tRNA(Thr). Also edits incorrectly charged L-seryl-tRNA(Thr). The sequence is that of Threonine--tRNA ligase from Tropheryma whipplei (strain TW08/27) (Whipple's bacillus).